The primary structure comprises 229 residues: 2-phytyl-1,4-naphtoquinone methyltransferase (229 aa).

This sequence belongs to the class I-like SAM-binding methyltransferase superfamily. MenG/UbiE family.

The catalysed reaction is demethylphylloquinol + S-adenosyl-L-methionine = phylloquinol + S-adenosyl-L-homocysteine + H(+). It participates in cofactor biosynthesis; phylloquinone biosynthesis. Its function is as follows. Methyltransferase required for the conversion of 2-phytyl-1,4-beta-naphthoquinol to phylloquinol. In Trichormus variabilis (strain ATCC 29413 / PCC 7937) (Anabaena variabilis), this protein is 2-phytyl-1,4-naphtoquinone methyltransferase.